A 129-amino-acid chain; its full sequence is Transcription antitermination protein NusB (129 aa).

The protein belongs to the NusB family.

Involved in transcription antitermination. Required for transcription of ribosomal RNA (rRNA) genes. Binds specifically to the boxA antiterminator sequence of the ribosomal RNA (rrn) operons. The sequence is that of Transcription antitermination protein NusB from Staphylococcus epidermidis (strain ATCC 35984 / DSM 28319 / BCRC 17069 / CCUG 31568 / BM 3577 / RP62A).